A 375-amino-acid chain; its full sequence is N-acetyldiaminopimelate deacetylase (375 aa).

D69 is a catalytic residue. The active-site Proton acceptor is the E128.

The protein belongs to the peptidase M20A family. N-acetyldiaminopimelate deacetylase subfamily.

The catalysed reaction is N-acetyl-(2S,6S)-2,6-diaminopimelate + H2O = (2S,6S)-2,6-diaminopimelate + acetate. It functions in the pathway amino-acid biosynthesis; L-lysine biosynthesis via DAP pathway; LL-2,6-diaminopimelate from (S)-tetrahydrodipicolinate (acetylase route): step 3/3. Functionally, catalyzes the conversion of N-acetyl-diaminopimelate to diaminopimelate and acetate. This Priestia megaterium (strain ATCC 12872 / QMB1551) (Bacillus megaterium) protein is N-acetyldiaminopimelate deacetylase.